The chain runs to 214 residues: Orotate phosphoribosyltransferase (214 aa).

Lys26 serves as a coordination point for 5-phospho-alpha-D-ribose 1-diphosphate. 34 to 35 contacts orotate; sequence FF. 5-phospho-alpha-D-ribose 1-diphosphate-binding positions include 72–73, Arg99, Lys100, Lys103, His105, and 124–132; these read YK and DDVITAGTA. Residues Thr128 and Arg157 each contribute to the orotate site.

The protein belongs to the purine/pyrimidine phosphoribosyltransferase family. PyrE subfamily. Homodimer. Mg(2+) serves as cofactor.

The enzyme catalyses orotidine 5'-phosphate + diphosphate = orotate + 5-phospho-alpha-D-ribose 1-diphosphate. Its pathway is pyrimidine metabolism; UMP biosynthesis via de novo pathway; UMP from orotate: step 1/2. Its function is as follows. Catalyzes the transfer of a ribosyl phosphate group from 5-phosphoribose 1-diphosphate to orotate, leading to the formation of orotidine monophosphate (OMP). This Pseudomonas fluorescens (strain SBW25) protein is Orotate phosphoribosyltransferase.